Reading from the N-terminus, the 372-residue chain is Pepsin A (372 aa).

Positions Met-1 to Glu-42 are cleaved as a propeptide — activation peptide. One can recognise a Peptidase A1 domain in the interval Tyr-60–Ala-369. Asp-78 is a catalytic residue. A disulfide bond links Cys-91 and Cys-96. Ser-114 is subject to Phosphoserine. The cysteines at positions 252 and 256 are disulfide-linked. Asp-261 is an active-site residue. The cysteines at positions 295 and 328 are disulfide-linked.

This sequence belongs to the peptidase A1 family.

Its subcellular location is the secreted. The enzyme catalyses Preferential cleavage: hydrophobic, preferably aromatic, residues in P1 and P1' positions. Cleaves 1-Phe-|-Val-2, 4-Gln-|-His-5, 13-Glu-|-Ala-14, 14-Ala-|-Leu-15, 15-Leu-|-Tyr-16, 16-Tyr-|-Leu-17, 23-Gly-|-Phe-24, 24-Phe-|-Phe-25 and 25-Phe-|-Tyr-26 bonds in the B chain of insulin.. Functionally, shows particularly broad specificity; although bonds involving phenylalanine and leucine are preferred, many others are also cleaved to some extent. In Bos taurus (Bovine), this protein is Pepsin A (PGA).